The primary structure comprises 835 residues: MKVLALRHSVAQVYADTQVYTHDNSKDEYENAFLISNLTTHNILYLNYSVKTLQILNKSGIAAIEIQKMDELFTLIRCNFTYDYIDDVVYLHDYSYYTNNEIRTDQHWVTKTNIEDYLLPGWKLTYVGYNGSDTRGHYNFSFRCQNAATDDDAIIEYIYSDELDFQSFILKKIKERMTTSLPIARLSNRVFRDKLFKTLSVNHDKVVNVGPRNESMFTFLDYPSIKQFSNGPYLVKDTIKLKQERWLGKRLSQFDIGQYKNMLNVLTTLYQYYDMYHEKPIVYMIGSAPSYWIYDVKQYSDLKFETWDPLDTPYSNLHHKELFYINDVQKLKDNSILYIDIRTDRGNMDWKEWRKVVERQTADNLYIAYKYLSTGRAKICCVKMTAMDLELPISAKLLHHPTTEIRSEFYLMMDIWDSKNIKRFIPKGVLYSYINNIITENVFIQQPFKLKTLKNEYVIALYALSNDLNNREDVIKLINNQKKALITVRINNTFKDEPKVGFKNIYDWTFLPTDFETSESIITSYDGCLGIFGLSISLASKPTGNNHLFILSGTDKYFKLDQFANHMSISRRSHQIRFSESATSYSGYIFRDLSNNNFNLIGTNVENSVSGHVYNALIYYRYNYSFDLKRWIYLHSTGKASIEGGRYYEHAPIELIYACRSAREFAKLQDDLTVLRYSNEIENYINKVYSITYADDPNYFIGVKFKNIPYKYNVKVPHLTFGVLNISEQMLPDAIAILKKFKNELFGMDITTSYTYMLSDEVYVANISGVLSTYFKIYNAFYKEQITFGQSRMFIPHVTLSFSNEKTVRIDTTKLYIDSIYLRKIKGDTVFDMTG.

Residues 171–245 (KKIKERMTTS…KDTIKLKQER (75 aa)) are N7-methyltransferase activity. Positions 246 to 428 (WLGKRLSQFD…KNIKRFIPKG (183 aa)) are 2'-O-methyltransferase activity. Residues 429–555 (VLYSYINNII…NHLFILSGTD (127 aa)) form an N7-methyltransferase activity region. A GTase/RTPase activity region spans residues 556 to 692 (KYFKLDQFAN…NYINKVYSIT (137 aa)). Positions 693-835 (YADDPNYFIG…KGDTVFDMTG (143 aa)) are 2'-5'-phosphodiesterase activity. Active-site for 2'-5'-phosphodiesterase activity residues include histidine 718, threonine 720, histidine 797, and threonine 799.

This sequence belongs to the rotavirus VP3 family. As to quaternary structure, interacts with VP1. Interacts with VP2.

It localises to the virion. It carries out the reaction a 5'-end diphospho-ribonucleoside in mRNA + GTP + H(+) = a 5'-end (5'-triphosphoguanosine)-ribonucleoside in mRNA + diphosphate. The enzyme catalyses a 5'-end (5'-triphosphoguanosine)-ribonucleoside in mRNA + S-adenosyl-L-methionine = a 5'-end (N(7)-methyl 5'-triphosphoguanosine)-ribonucleoside in mRNA + S-adenosyl-L-homocysteine. It catalyses the reaction 5'-triphosphoadenylyl-(2'-&gt;5')-adenylyl-(2'-&gt;5')-adenosine + 2 H2O = 2 AMP + ATP + 2 H(+). Functionally, multifunctional enzyme involved in mRNA capping. Catalyzes the formation of the 5' cap structure on the viral plus-strand transcripts. Specifically binds to GTP and displays guanylyltransferase and methyltransferase activities. Has affinity for ssRNA but not for dsRNA. Capping activity is non-specific and caps RNAs that initiate with either a G or an A residue. Together with VP1 polymerase, forms a VP1-VP3 complex positioned near the channels situated at each of the five-fold vertices of the core. Following infection, the outermost layer of the virus is lost, leaving a double-layered particle (DLP) made up of the core and VP6 shell. VP1 then catalyzes the transcription of fully conservative plus-strand genomic RNAs that are capped by VP3 and extruded through the DLP's channels into the cytoplasm where they function as mRNAs for translation of viral proteins. DLPs probably have an RNA triphosphatase activity as well, whereas open cores do not. Counteracts the host innate immune response thanks to its phosphodiesterase that degrades the 5'-triphosphorylated, 2'-5' linked adenylate oligomers produced by the host cell IFN-inducible 2',5'-oligoadenylate synthetase (OAS). The host RNaseL is therefore not activated. The chain is Protein VP3 from Homo sapiens (Human).